The primary structure comprises 301 residues: Peptidyl-prolyl cis-trans isomerase E (301 aa).

Residues 5-83 enclose the RRM domain; that stretch reads KRVLYVGGLA…GRTIRVNLAK (79 aa). A phosphoserine mark is found at serine 91, serine 97, and serine 119. The segment at 107–140 is disordered; that stretch reads GKTLEENKEEEGSEPPKAETQEGEPAAKKARSNP. One can recognise a PPIase cyclophilin-type domain in the interval 143–299; the sequence is YMDIKIGNKP…QKVIIADCGE (157 aa).

This sequence belongs to the cyclophilin-type PPIase family. PPIase E subfamily. In terms of assembly, identified in the spliceosome C complex. Component of the XAB2 complex, a multimeric protein complex composed of XAB2, PRPF19, AQR, ZNF830, ISY1, and PPIE. Identified in a pentameric intron-binding (IB) complex composed of AQR, XAB2, ISY1, ZNF830 and PPIE that is incorporated into the spliceosome as a preassembled complex. The IB complex does not contain PRPF19. Interacts (via RNA-binding domain) with KMT2A (via the third PHD-type zinc-finger).

It is found in the nucleus. The catalysed reaction is [protein]-peptidylproline (omega=180) = [protein]-peptidylproline (omega=0). In terms of biological role, involved in pre-mRNA splicing as component of the spliceosome. Combines RNA-binding and PPIase activities. Binds mRNA and has a preference for single-stranded RNA molecules with poly-A and poly-U stretches, suggesting it binds to the poly(A)-region in the 3'-UTR of mRNA molecules. Catalyzes the cis-trans isomerization of proline imidic peptide bonds in proteins. Inhibits KMT2A activity; this requires proline isomerase activity. This Pongo abelii (Sumatran orangutan) protein is Peptidyl-prolyl cis-trans isomerase E (PPIE).